Reading from the N-terminus, the 303-residue chain is Cytidine deaminase (303 aa).

CMP/dCMP-type deaminase domains lie at 57–172 and 196–303; these read TDKE…YLPD and ITED…IQVS. 98 to 100 contributes to the substrate binding site; that stretch reads NQE. His-111 is a binding site for Zn(2+). The active-site Proton donor is the Glu-113. Residues Cys-138 and Cys-141 each coordinate Zn(2+).

Belongs to the cytidine and deoxycytidylate deaminase family. As to quaternary structure, homodimer. Requires Zn(2+) as cofactor.

It catalyses the reaction cytidine + H2O + H(+) = uridine + NH4(+). The catalysed reaction is 2'-deoxycytidine + H2O + H(+) = 2'-deoxyuridine + NH4(+). This enzyme scavenges exogenous and endogenous cytidine and 2'-deoxycytidine for UMP synthesis. This chain is Cytidine deaminase, found in Histophilus somni (strain 2336) (Haemophilus somnus).